A 216-amino-acid polypeptide reads, in one-letter code: Protein Syd (216 aa).

The protein belongs to the Syd family.

It localises to the cell inner membrane. Interacts with the SecY protein in vivo. May bind preferentially to an uncomplexed state of SecY, thus functioning either as a chelating agent for excess SecY in the cell or as a regulatory factor that negatively controls the translocase function. This Shewanella baltica (strain OS185) protein is Protein Syd.